A 642-amino-acid polypeptide reads, in one-letter code: Threonine--tRNA ligase (642 aa).

The 61-residue stretch at methionine 1–threonine 61 folds into the TGS domain. The catalytic stretch occupies residues aspartate 244–proline 535. 3 residues coordinate Zn(2+): cysteine 335, histidine 386, and histidine 512.

It belongs to the class-II aminoacyl-tRNA synthetase family. Homodimer. It depends on Zn(2+) as a cofactor.

The protein localises to the cytoplasm. It carries out the reaction tRNA(Thr) + L-threonine + ATP = L-threonyl-tRNA(Thr) + AMP + diphosphate + H(+). Its function is as follows. Catalyzes the attachment of threonine to tRNA(Thr) in a two-step reaction: L-threonine is first activated by ATP to form Thr-AMP and then transferred to the acceptor end of tRNA(Thr). Also edits incorrectly charged L-seryl-tRNA(Thr). The protein is Threonine--tRNA ligase of Vibrio vulnificus (strain YJ016).